A 1294-amino-acid chain; its full sequence is Disease resistance protein L6 (1294 aa).

A signal peptide spans methionine 1 to lysine 29. The segment at asparagine 34–glycine 54 is disordered. Residues valine 59–isoleucine 221 form the TIR domain. NAD(+) contacts are provided by residues arginine 68–arginine 73 and glycine 101. Glutamate 135 is a catalytic residue. The 240-residue stretch at aspartate 241–aspartate 480 folds into the NB-ARC domain. 11 LRR repeats span residues alanine 246 to glycine 268, leucine 468 to aspartate 492, leucine 604 to leucine 625, proline 626 to methionine 650, leucine 904 to glycine 928, phenylalanine 1012 to glutamate 1039, leucine 1063 to leucine 1085, lysine 1086 to glutamate 1109, leucine 1179 to serine 1203, leucine 1205 to serine 1229, and leucine 1254 to threonine 1278.

Belongs to the disease resistance TIR-NB-LRR family. In terms of assembly, homooligomer; homooligomerization is required for activity.

The enzyme catalyses NAD(+) + H2O = ADP-D-ribose + nicotinamide + H(+). It carries out the reaction NADP(+) + H2O = ADP-D-ribose 2'-phosphate + nicotinamide + H(+). It catalyses the reaction NAD(+) = 2'cADPR + nicotinamide + H(+). TIR-NB-LRR receptor-like protein that confers resistance to the flax rust phytopathogenic fungus (M.lini). An NAD(+) hydrolase (NADase): in response to activation, catalyzes cleavage of NAD(+) into ADP-D-ribose (ADPR) and nicotinamide; NAD(+) cleavage triggering a defense system that promotes cell death. Also able to hydrolyze NADP(+), but not other NAD(+)-related molecules. Makes small amounts of 2' cyclic ADPR (2'cADPR). This chain is Disease resistance protein L6, found in Linum usitatissimum (Flax).